The sequence spans 81 residues: Exodeoxyribonuclease 7 small subunit (81 aa).

The protein belongs to the XseB family. Heterooligomer composed of large and small subunits.

The protein resides in the cytoplasm. The catalysed reaction is Exonucleolytic cleavage in either 5'- to 3'- or 3'- to 5'-direction to yield nucleoside 5'-phosphates.. Its function is as follows. Bidirectionally degrades single-stranded DNA into large acid-insoluble oligonucleotides, which are then degraded further into small acid-soluble oligonucleotides. The polypeptide is Exodeoxyribonuclease 7 small subunit (Nitratidesulfovibrio vulgaris (strain ATCC 29579 / DSM 644 / CCUG 34227 / NCIMB 8303 / VKM B-1760 / Hildenborough) (Desulfovibrio vulgaris)).